The sequence spans 162 residues: Toluate 1,2-dioxygenase subunit beta (162 aa).

Belongs to the bacterial ring-hydroxylating dioxygenase beta subunit family. This dioxygenase system consists of three proteins: the two subunits of the hydroxylase component (XylX and XylY), and an electron transfer component (XylZ).

It functions in the pathway xenobiotic degradation; toluene degradation. The sequence is that of Toluate 1,2-dioxygenase subunit beta (xylY) from Pseudomonas putida (Arthrobacter siderocapsulatus).